We begin with the raw amino-acid sequence, 550 residues long: Glucose-6-phosphate isomerase 2 (550 aa).

E357 functions as the Proton donor in the catalytic mechanism. Residues H388 and K514 contribute to the active site. Residues D527–K550 are disordered.

Belongs to the GPI family.

The protein localises to the cytoplasm. The enzyme catalyses alpha-D-glucose 6-phosphate = beta-D-fructose 6-phosphate. It functions in the pathway carbohydrate biosynthesis; gluconeogenesis. Its pathway is carbohydrate degradation; glycolysis; D-glyceraldehyde 3-phosphate and glycerone phosphate from D-glucose: step 2/4. Its function is as follows. Catalyzes the reversible isomerization of glucose-6-phosphate to fructose-6-phosphate. This chain is Glucose-6-phosphate isomerase 2, found in Chromobacterium violaceum (strain ATCC 12472 / DSM 30191 / JCM 1249 / CCUG 213 / NBRC 12614 / NCIMB 9131 / NCTC 9757 / MK).